Consider the following 124-residue polypeptide: Fluoride-specific ion channel FluC 2 (124 aa).

4 consecutive transmembrane segments (helical) span residues 8-28 (LPNQ…GALV), 34-54 (NDLL…GLPF), 60-80 (LLLG…MVEC), and 93-113 (LGLI…GFLI). Residues G68 and T71 each coordinate Na(+).

Belongs to the fluoride channel Fluc/FEX (TC 1.A.43) family.

The protein localises to the cell inner membrane. The catalysed reaction is fluoride(in) = fluoride(out). Na(+) is not transported, but it plays an essential structural role and its presence is essential for fluoride channel function. Functionally, fluoride-specific ion channel. Important for reducing fluoride concentration in the cell, thus reducing its toxicity. This is Fluoride-specific ion channel FluC 2 from Prochlorococcus marinus (strain MIT 9313).